Consider the following 169-residue polypeptide: Macrocypin-1a (169 aa).

This sequence belongs to the protease inhibitor I85 family.

Its function is as follows. Inhibits papain and cysteine cathepsin endopeptidases, and also inhibits cathepsins B and H, which exhibit both exopeptidase and endopeptidase activities. This chain is Macrocypin-1a, found in Macrolepiota procera (Parasol mushroom).